The primary structure comprises 1522 residues: MSRNDKEPFFVKFLKSSDNSKCFFKALESIKEFQSEEYLQIITEEEALKIKENDRSLYICDPFSGVVFDHLKKLGCRIVGPQVVIFCMHHQRCVPRAEHPVYNMVMSDVTISCTSLEKEKREEVHKYVQMMGGRVYRDLNVSVTHLIAGEVGSKKYLVAANLKKPILLPSWIKTLWEKSQEKKITRYTDINMEDFKCPIFLGCIICVTGLCGLDRKEVQQLTVKHGGQYMGQLKMNECTHLIVQEPKGQKYECAKRWNVHCVTTQWFFDSIEKGFCQDESIYKTEPRPEAKTMPNSSTPTSQINTIDSRTLSDVSNISNINASCVSESICNSLNSKLEPTLENLENLDVSAFQAPEDLLDGCRIYLCGFSGRKLDKLRRLINSGGGVRFNQLNEDVTHVIVGDYDDELKQFWNKSAHRPHVVGAKWLLECFSKGYMLSEEPYIHANYQPVEIPVSHKPESKAALLKKKNSSFSKKDFAPSEKHEQADEDLLSQYENGSSTVVEAKTSEARPFNDSTHAEPLNDSTHISLQEENQSSVSHCVPDVSTITEEGLFSQKSFLVLGFSNENESNIANIIKENAGKIMSLLSRTVADYAVVPLLGCEVEATVGEVVTNTWLVTCIDYQTLFDPKSNPLFTPVPVMTGMTPLEDCVISFSQCAGAEKESLTFLANLLGASVQEYFVRKSNAKKGMFASTHLILKERGGSKYEAAKKWNLPAVTIAWLLETARTGKRADESHFLIENSTKEERSLETEITNGINLNSDTAEHPGTRLQTHRKTVVTPLDMNRFQSKAFRAVVSQHARQVAASPAVGQPLQKEPSLHLDTPSKFLSKDKLFKPSFDVKDALAALETPGRPSQQKRKPSTPLSEVIVKNLQLALANSSRNAVALSASPQLKEAQSEKEEAPKPLHKVVVCVSKKLSKKQSELNGIAASLGADYRWSFDETVTHFIYQGRPNDTNREYKSVKERGVHIVSEHWLLDCAQECKHLPESLYPHTYNPKMSLDISAVQDGRLCNSRLLSAVSSTKDDEPDPLILEENDVDNMATNNKESAPSNGSGKNDSKGVLTQTLEMRENFQKQLQEIMSATSIVKPQGQRTSLSRSGCNSASSTPDSTRSARSGRSRVLEALRQSRQTVPDVNTEPSQNEQIIWDDPTAREERARLASNLQWPSCPTQYSELQVDIQNLEDSPFQKPLHDSEIAKQAVCDPGNIRVTEAPKHPISEELETPIKDSHLIPTPQAPSIAFPLANPPVAPHPREKIITIEETHEELKKQYIFQLSSLNPQERIDYCHLIEKLGGLVIEKQCFDPTCTHIVVGHPLRNEKYLASVAAGKWVLHRSYLEACRTAGHFVQEEDYEWGSSSILDVLTGINVQQRRLALAAMRWRKKIQQRQESGIVEGAFSGWKVILHVDQSREAGFKRLLQSGGAKVLPGHSVPLFKEATHLFSDLNKLKPDDSGVNIAEAAAQNVYCLRTEYIADYLMQESPPHVENYCLPEAISFIQNNKELGTGLSQKRKAPTEKNKIKRPRVH.

BRCT domains lie at Val-101–Asp-189 and Phe-195–Thr-284. Thr-298 is subject to Phosphothreonine. The residue at position 301 (Ser-301) is a Phosphoserine. BRCT domains follow at residues Ala-354 to His-444, Thr-548 to Leu-633, and Thr-641 to Ile-738. Residues Ile-756–Leu-891 form an interaction with CIP2A region. Thr-779 and Thr-848 each carry phosphothreonine. A Nuclear localization signal motif is present at residues Pro-852–Lys-858. Residue Ser-860 is modified to Phosphoserine. A Phosphothreonine modification is found at Thr-861. Phosphoserine is present on residues Ser-864, Ser-886, and Ser-888. The region spanning Glu-900–His-991 is the BRCT 6 domain. Ser-1002 carries the phosphoserine modification. Positions Val-1018 to Lys-1058 are disordered. Acidic residues predominate over residues Asp-1024–Val-1036. Residues Met-1039–Lys-1058 are compositionally biased toward polar residues. Residues Thr-1062 and Thr-1064 each carry the phosphothreonine modification. Residues Ser-1083–Ser-1114 show a composition bias toward polar residues. The disordered stretch occupies residues Ser-1083 to Arg-1118. 2 consecutive BRCT domains span residues Glu-1259 to Trp-1351 and Ile-1389 to Leu-1486. Residues Thr-1501–His-1522 are disordered. Ser-1504 bears the Phosphoserine mark. Positions Lys-1517 to Arg-1520 match the Nuclear localization signal motif.

This sequence belongs to the TOPBP1 family. In terms of assembly, interacts (via BRCT domains 1 and 2) with (phosphorylated) MDC1; promoting TOPBP1 recruitment to DNA damage sites during mitosis. Interacts (via BRCT domains 7 and 8) with (autophosphorylated) ATR; promoting activation of ATR. Interacts (via BRCT domains 7 and 8) with (phosphorylated) POLQ; specifically binds POLQ phosphorylated by PLK1, promoting POLQ recruitment to DNA damage sites. Interacts (via BRCT domains 1 and 2) with (phosphorylated) RAD9A. Interacts (via BRCT domain 2) with (phosphorylated) TP53BP1. Interacts (via BRCT domain 2) with (phosphorylated) HTATSF1. Interacts (via BRCT domains 7 and 8) with (phosphorylated) RAD51; promoting RAD51 recruitment to damaged chromatin. Interacts with CIP2A; forming the CIP2A-TOPBP1 complex. Interacts with POLE. Interacts with UBR5. Interacts with E2F1. Interacts with PML. Interacts with SMARCA2. Interacts with SMARCA4. Interacts with RHNO1. May interact with TOP2B. Interacts with TICRR. Interacts with HELB. Interacts (via residues 1233-1522) with RECQL4. In terms of processing, phosphorylated on serine and threonine residues in response to X-ray irradiation. Post-translationally, ubiquitinated and degraded by the proteasome. X-ray irradiation reduces ubiquitination. Deubiquitinated by USP13; leading to TOPBP1 stabilizion and activation of the ATR-TOPBP1 axis pathway. Highly expressed in heart, brain, placenta, lung and kidney.

It is found in the nucleus. The protein localises to the chromosome. The protein resides in the cytoplasm. It localises to the cytoskeleton. Its subcellular location is the microtubule organizing center. It is found in the centrosome. The protein localises to the spindle pole. Scaffold protein that acts as a key protein-protein adapter in DNA replication and DNA repair. Composed of multiple BRCT domains, which specifically recognize and bind phosphorylated proteins, bringing proteins together into functional combinations. Required for DNA replication initiation but not for the formation of pre-replicative complexes or the elongation stages. Necessary for the loading of replication factors onto chromatin, including GMNC, CDC45, DNA polymerases and components of the GINS complex. Plays a central role in DNA repair by bridging proteins and promoting recruitment of proteins to DNA damage sites. Involved in double-strand break (DSB) repair via homologous recombination in S-phase by promoting the exchange between the DNA replication factor A (RPA) complex and RAD51. Mechanistically, TOPBP1 is recruited to DNA damage sites in S-phase via interaction with phosphorylated HTATSF1, and promotes the loading of RAD51, thereby facilitating RAD51 nucleofilaments formation and RPA displacement, followed by homologous recombination. Involved in microhomology-mediated end-joining (MMEJ) DNA repair by promoting recruitment of polymerase theta (POLQ) to DNA damage sites during mitosis. MMEJ is an alternative non-homologous end-joining (NHEJ) machinery that takes place during mitosis to repair DSBs in DNA that originate in S-phase. Recognizes and binds POLQ phosphorylated by PLK1, enabling its recruitment to DSBs for subsequent repair. Involved in G1 DNA damage checkpoint by acting as a molecular adapter that couples TP53BP1 and the 9-1-1 complex. In response to DNA damage, triggers the recruitment of checkpoint signaling proteins on chromatin, which activate the CHEK1 signaling pathway and block S-phase progression. Acts as an activator of the kinase activity of ATR. Also required for chromosomal stability when DSBs occur during mitosis by forming filamentous assemblies that bridge MDC1 and tether broken chromosomes during mitosis. Together with CIP2A, plays an essential role in the response to genome instability generated by the presence of acentric chromosome fragments derived from shattered chromosomes within micronuclei. Micronuclei, which are frequently found in cancer cells, consist of chromatin surrounded by their own nuclear membrane: following breakdown of the micronuclear envelope, a process associated with chromothripsis, the CIP2A-TOPBP1 complex tethers chromosome fragments during mitosis to ensure clustered segregation of the fragments to a single daughter cell nucleus, facilitating re-ligation with limited chromosome scattering and loss. Recruits the SWI/SNF chromatin remodeling complex to E2F1-responsive promoters, thereby down-regulating E2F1 activity and inhibiting E2F1-dependent apoptosis during G1/S transition and after DNA damage. The sequence is that of DNA topoisomerase 2-binding protein 1 from Homo sapiens (Human).